The primary structure comprises 207 residues: MARYIGPKAKLSRREGTDLFLKSARRSLADKCKLDSKPGQHGRTSGARTSDYGTQLREKQKVKRIYGVLERQFRRYFAEADRLKGNTGENLLQLLESRLDNVVYRMGFGSTRAEARQLVSHKAIVVNGVVSNIPSMQVKAGDVVAVRETKKKQARILEALSLAEQGGMPSWVAVDSKKFEGTFKQKPERSDIAGDINESLIVELYSR.

The segment at 32-55 is disordered; the sequence is CKLDSKPGQHGRTSGARTSDYGTQ. Polar residues predominate over residues 42 to 53; it reads GRTSGARTSDYG. One can recognise an S4 RNA-binding domain in the interval 97 to 158; that stretch reads SRLDNVVYRM…TKKKQARILE (62 aa).

This sequence belongs to the universal ribosomal protein uS4 family. As to quaternary structure, part of the 30S ribosomal subunit. Contacts protein S5. The interaction surface between S4 and S5 is involved in control of translational fidelity.

Functionally, one of the primary rRNA binding proteins, it binds directly to 16S rRNA where it nucleates assembly of the body of the 30S subunit. With S5 and S12 plays an important role in translational accuracy. The sequence is that of Small ribosomal subunit protein uS4 from Paraburkholderia phytofirmans (strain DSM 17436 / LMG 22146 / PsJN) (Burkholderia phytofirmans).